The primary structure comprises 330 residues: Glucokinase (330 aa).

14–19 (ADIGGT) contributes to the ATP binding site.

This sequence belongs to the bacterial glucokinase family.

It localises to the cytoplasm. It catalyses the reaction D-glucose + ATP = D-glucose 6-phosphate + ADP + H(+). The protein is Glucokinase of Colwellia psychrerythraea (strain 34H / ATCC BAA-681) (Vibrio psychroerythus).